A 570-amino-acid chain; its full sequence is Acetolactate synthase (570 aa).

E60 is a thiamine diphosphate binding site. FAD contacts are provided by residues Q162, F266 to D287, and D308 to D327. The segment at S399–T479 is thiamine pyrophosphate binding. Position 450 (D450) interacts with Mg(2+).

It belongs to the TPP enzyme family. Mg(2+) is required as a cofactor. It depends on thiamine diphosphate as a cofactor.

It catalyses the reaction 2 pyruvate + H(+) = (2S)-2-acetolactate + CO2. It functions in the pathway polyol metabolism; (R,R)-butane-2,3-diol biosynthesis; (R,R)-butane-2,3-diol from pyruvate: step 1/3. In Bacillus subtilis (strain 168), this protein is Acetolactate synthase (alsS).